The following is a 121-amino-acid chain: Small basic protein (121 aa).

The next 3 helical transmembrane spans lie at 2–22, 29–49, and 57–77; these read WLPV…NLTI, YLSL…RAHL, and VFVS…FLGV.

This sequence belongs to the sbp family.

Its subcellular location is the cell membrane. This chain is Small basic protein (sbp), found in Bacillus subtilis (strain 168).